We begin with the raw amino-acid sequence, 75 residues long: UPF0291 protein lin1342 (75 aa).

Residues 55–75 (IDPKGNDVTPHKIKQMRKNKK) form a disordered region. A compositionally biased stretch (basic residues) spans 65–75 (HKIKQMRKNKK).

Belongs to the UPF0291 family.

It localises to the cytoplasm. This is UPF0291 protein lin1342 from Listeria innocua serovar 6a (strain ATCC BAA-680 / CLIP 11262).